The sequence spans 591 residues: Transcription factor COE1 (591 aa).

Position 1 is an N-acetylmethionine (Met1). Residues 1 to 14 (MFGIQESIQRSGSS) are compositionally biased toward polar residues. The tract at residues 1-21 (MFGIQESIQRSGSSMKEEPLG) is disordered. Lys16 is covalently cross-linked (Glycyl lysine isopeptide (Lys-Gly) (interchain with G-Cter in SUMO1); alternate). Lys16 participates in a covalent cross-link: Glycyl lysine isopeptide (Lys-Gly) (interchain with G-Cter in SUMO2); alternate. An interaction with DNA region spans residues 63–66 (RKSN). The segment at 151–170 (CRVLLTHEIMCSRCCDKKSC) adopts a C5-type zinc-finger fold. Interaction with DNA stretches follow at residues 197-204 (NCLKNAGN) and 236-239 (NNSK). Residues 262–345 (PCIKAISPSE…KGTPGRFIYT (84 aa)) enclose the IPT/TIG domain. Residues 457–480 (GFTRNSSSVSPHGYVPSTTPQQTN) form a disordered region.

Belongs to the COE family. As to quaternary structure, homodimer. Interacts with ZNF423 and ZNF521, leading to prevent EBF1 to bind DNA and activate target genes. Interacts with CCR4-NOT component CNOT3. In terms of assembly, (Microbial infection) Interacts with Epstein-barr virus protein EBNA2.

It is found in the nucleus. Key pioneer transcription factor of B-cell specification and commitment. Recognizes variations of the palindromic sequence 5'-ATTCCCNNGGGAATT-3'. Operates in a transcription factor network to activate B-cell-specific genes and repress genes associated with alternative cell fates. For instance, positively regulates many B-cell specific genes including BCR or CD40 while repressing genes that direct cells into alternative lineages, including GATA3 and TCF7 for the T-cell lineage. In addition to its role during lymphopoiesis, controls the thermogenic gene program in adipocytes during development and in response to environmental cold. In terms of biological role, (Microbial infection) Acts as a chromatin anchor for Epstein-Barr virus EBNA2 to mediate the assembly of EBNA2 chromatin complexes in B-cells. In addition, binds to the viral LMP1 proximal promoter and promotes its expression during latency. The chain is Transcription factor COE1 (EBF1) from Homo sapiens (Human).